Consider the following 95-residue polypeptide: Neurexophilin-3 (95 aa).

2 N-linked (GlcNAc...) asparagine glycosylation sites follow: Asn1 and Asn7. Residues 1–21 form an III region; it reads NATGQGNISISLVPPSKAVEX. An IV (linker domain) region spans residues 22–30; the sequence is HQXQQIFIE. The segment at 31 to 95 is v (Cys-rich); that stretch reads AKASKIFNCR…YIAFYSTDYR (65 aa).

It belongs to the neurexophilin family.

Its subcellular location is the secreted. Functionally, may be signaling molecules that resemble neuropeptides. Ligand for alpha-neurexins. The chain is Neurexophilin-3 (NXPH3) from Macaca mulatta (Rhesus macaque).